A 445-amino-acid chain; its full sequence is MLFAEKNILSVSQLTGLVRNVLEDNFDHVWVEGEVSNLATPGSGHLYFTLKDASAQLRCVMFRASVRALKFKPSDGMGLIARGRLSVFDARGEYQLIVEYLEPKGIGALQLAFIQLKERLAKEGLFSDSHKKDIPRLPQRIGIVTSATGAAIHDILNVLNRRFANVQVLLRPVKVQGEGAAEEIAAAVNDLNRYGSIDVMIVGRGGGSLEDLWAFNEEIVARAIYRSSIPVISAVGHEIDFTISDFVADLRAPTPSAAAEMVIKSKAEISAELEALFHRLGMAVRRLLNEHWGELNGLVRAVKDPSMLLGHLAQRLDDLEGRSWRCIRQLLIRSADTNHFLHDRLRLQNPVLRLERCREQLLLVQSRIEKTMMHTVERAGQSLAFNAGKLQALSPLATMARGYSIVKKLPGGAVVTDRDQLAPGDSLDILLRKGRAICRVECTHD.

Belongs to the XseA family. As to quaternary structure, heterooligomer composed of large and small subunits.

It is found in the cytoplasm. It catalyses the reaction Exonucleolytic cleavage in either 5'- to 3'- or 3'- to 5'-direction to yield nucleoside 5'-phosphates.. Functionally, bidirectionally degrades single-stranded DNA into large acid-insoluble oligonucleotides, which are then degraded further into small acid-soluble oligonucleotides. In Geotalea daltonii (strain DSM 22248 / JCM 15807 / FRC-32) (Geobacter daltonii), this protein is Exodeoxyribonuclease 7 large subunit.